A 172-amino-acid polypeptide reads, in one-letter code: Protein GrpE (172 aa).

Belongs to the GrpE family. As to quaternary structure, homodimer.

The protein localises to the cytoplasm. Functionally, participates actively in the response to hyperosmotic and heat shock by preventing the aggregation of stress-denatured proteins, in association with DnaK and GrpE. It is the nucleotide exchange factor for DnaK and may function as a thermosensor. Unfolded proteins bind initially to DnaJ; upon interaction with the DnaJ-bound protein, DnaK hydrolyzes its bound ATP, resulting in the formation of a stable complex. GrpE releases ADP from DnaK; ATP binding to DnaK triggers the release of the substrate protein, thus completing the reaction cycle. Several rounds of ATP-dependent interactions between DnaJ, DnaK and GrpE are required for fully efficient folding. The sequence is that of Protein GrpE from Thermotoga sp. (strain RQ2).